The chain runs to 244 residues: tRNA pseudouridine synthase A (244 aa).

Asp55 serves as the catalytic Nucleophile. Residue Tyr113 coordinates substrate.

It belongs to the tRNA pseudouridine synthase TruA family. Homodimer.

The enzyme catalyses uridine(38/39/40) in tRNA = pseudouridine(38/39/40) in tRNA. Formation of pseudouridine at positions 38, 39 and 40 in the anticodon stem and loop of transfer RNAs. The sequence is that of tRNA pseudouridine synthase A from Phytoplasma mali (strain AT).